Reading from the N-terminus, the 462-residue chain is 23S rRNA (uracil(1939)-C(5))-methyltransferase RlmD (462 aa).

Residues 6 to 76 form the TRAM domain; it reads KSRKPQQPEY…KRLEEAEMVE (71 aa). Residues Cys-90, Cys-96, Cys-99, and Cys-178 each coordinate [4Fe-4S] cluster. S-adenosyl-L-methionine contacts are provided by Gln-287, Phe-316, Asn-321, Glu-340, Asp-367, and Asp-388. Catalysis depends on Cys-414, which acts as the Nucleophile.

Belongs to the class I-like SAM-binding methyltransferase superfamily. RNA M5U methyltransferase family. RlmD subfamily.

The catalysed reaction is uridine(1939) in 23S rRNA + S-adenosyl-L-methionine = 5-methyluridine(1939) in 23S rRNA + S-adenosyl-L-homocysteine + H(+). Functionally, catalyzes the formation of 5-methyl-uridine at position 1939 (m5U1939) in 23S rRNA. This is 23S rRNA (uracil(1939)-C(5))-methyltransferase RlmD from Acinetobacter baumannii (strain AB0057).